The chain runs to 333 residues: GTPase Obg (333 aa).

An Obg domain is found at 1–159; that stretch reads MQFIDLAEIH…RHLRLELKLL (159 aa). An OBG-type G domain is found at 160–328; sequence AEVGIIGLPN…LLEAVWQELG (169 aa). Residues 166–173, 191–195, 213–216, 280–283, and 309–311 contribute to the GTP site; these read GLPNAGKS, FTTLV, DIPG, NKID, and SAV. Mg(2+)-binding residues include Ser-173 and Thr-193.

Belongs to the TRAFAC class OBG-HflX-like GTPase superfamily. OBG GTPase family. In terms of assembly, monomer. It depends on Mg(2+) as a cofactor.

The protein resides in the cytoplasm. Functionally, an essential GTPase which binds GTP, GDP and possibly (p)ppGpp with moderate affinity, with high nucleotide exchange rates and a fairly low GTP hydrolysis rate. Plays a role in control of the cell cycle, stress response, ribosome biogenesis and in those bacteria that undergo differentiation, in morphogenesis control. The polypeptide is GTPase Obg (Thermosynechococcus vestitus (strain NIES-2133 / IAM M-273 / BP-1)).